Consider the following 906-residue polypeptide: Centromere protein C (906 aa).

Polar residues-rich tracts occupy residues 56 to 74 and 87 to 96; these read SLTS…SSSK and SSRTGEASLQ. Disordered regions lie at residues 56-115 and 141-169; these read SLTS…NEVH and QKAA…NKNI. Phosphoserine is present on residues S71 and S94. Over residues 97–108 the composition is skewed to low complexity; that stretch reads ASAEPSEAAGGS. Glycyl lysine isopeptide (Lys-Gly) (interchain with G-Cter in SUMO2) cross-links involve residues K150 and K182. The interval 197–224 is disordered; the sequence is VEDNLSKGQEGTSSEITQKRDDLSSDVQ. The span at 202–212 shows a compositional bias: polar residues; it reads SKGQEGTSSEI. The short motif at 228-242 is the Nuclear localization signal element; that stretch reads KKNFSELFLETVKRK. Residues K229, K240, K242, and K266 each participate in a glycyl lysine isopeptide (Lys-Gly) (interchain with G-Cter in SUMO2) cross-link. Disordered stretches follow at residues 294–320, 341–596, and 623–671; these read RHLS…KSHS, AQLS…SLAI, and EYTS…EQDQ. Phosphoserine occurs at positions 302, 344, 363, and 404. Over residues 402–424 the composition is skewed to polar residues; sequence GQSSWENSNVSNTGQDKLQINSK. Over residues 426-450 the composition is skewed to basic and acidic residues; the sequence is NMKDCEEVRNEPNPKKQKPALENKK. A Nuclear localization signal motif is present at residues 449 to 466; that stretch reads KKKTNSTQTNKEKSGKKF. Residues 465–474 show a composition bias toward low complexity; that stretch reads KFFSGGSKNK. The segment covering 481-494 has biased composition (polar residues); it reads TLTSRRSCRISQRP. S495 carries the post-translational modification Phosphoserine. Residues 496–512 are compositionally biased toward basic and acidic residues; the sequence is EWWRVKSDESSVDRNPS. K501 participates in a covalent cross-link: Glycyl lysine isopeptide (Lys-Gly) (interchain with G-Cter in SUMO2). S505 carries the phosphoserine modification. A compositionally biased stretch (basic residues) spans 523–546; sequence NKKKQTKRNHVSKRAGKKPGSSKR. The short motif at 525 to 540 is the Nuclear localization signal element; sequence KKQTKRNHVSKRAGKK. Positions 626–637 are enriched in polar residues; the sequence is SKTQMESASNSE. K640 participates in a covalent cross-link: Glycyl lysine isopeptide (Lys-Gly) (interchain with G-Cter in SUMO2). Residues S647 and S673 each carry the phosphoserine modification. K692 participates in a covalent cross-link: Glycyl lysine isopeptide (Lys-Gly) (interchain with G-Cter in SUMO2). The interval 702–724 is MIF2 homology domain II; sequence VRRSNRIRLKPLEYWRGERVDYQ. S728 and S737 each carry phosphoserine. A Nuclear localization signal motif is present at residues 744-762; sequence KIKAQRNLGKVNKKVTKKP. K770 is covalently cross-linked (Glycyl lysine isopeptide (Lys-Gly) (interchain with G-Cter in SUMO2)). Residues 853 to 906 form an MIF2 homology domain III region; it reads LVFYVNFGDLLCTLHETPYKLTTGDSFYVPSGNHYNIKNLLNVESSLLFTQIKR.

The protein belongs to the CENP-C/MIF2 family. As to quaternary structure, oligomer. Component of the CENPA-NAC complex, at least composed of CENPA, CENPC, CENPH, CENPM, CENPN, CENPT and CENPU. The CENPA-NAC complex interacts with the CENPA-CAD complex, composed of CENPI, CENPK, CENPL, CENPO, CENPP, CENPQ, CENPR and CENPS. Binds to DAXX. Interacts with DNMT3B. Interacts directly with CENPA. Identified in a centromere complex containing histones H2A, H2B and H4, and at least CENPA, CENPB, CENPC, CENPT, CENPN, HJURP, SUPT16H, SSRP1 and RSF1. Interacts with MEIKIN.

It is found in the nucleus. The protein localises to the chromosome. Its subcellular location is the centromere. The protein resides in the kinetochore. Its function is as follows. Component of the CENPA-NAC (nucleosome-associated) complex, a complex that plays a central role in assembly of kinetochore proteins, mitotic progression and chromosome segregation. The CENPA-NAC complex recruits the CENPA-CAD (nucleosome distal) complex and may be involved in incorporation of newly synthesized CENPA into centromeres. CENPC recruits DNA methylation and DNMT3B to both centromeric and pericentromeric satellite repeats and regulates the histone code in these regions. This Mus musculus (Mouse) protein is Centromere protein C (Cenpc).